The chain runs to 258 residues: Small ribosomal subunit protein uS2 (258 aa).

The interval 226–258 (KQGQDDEETLEVDFKENADGSEEIVSAEENPED) is disordered. Residues 244-258 (DGSEEIVSAEENPED) show a composition bias toward acidic residues.

The protein belongs to the universal ribosomal protein uS2 family.

In Lactobacillus acidophilus (strain ATCC 700396 / NCK56 / N2 / NCFM), this protein is Small ribosomal subunit protein uS2.